The primary structure comprises 361 residues: Caspase activity and apoptosis inhibitor 1 (361 aa).

Over residues 1-14 (MTGKKSSREKRRKR) the composition is skewed to basic residues. 2 disordered regions span residues 1–28 (MTGK…APDI) and 67–100 (GGSG…GSLQ). The span at 19–28 (AAAALAAPDI) shows a compositional bias: low complexity. Ser-89 bears the Phosphoserine mark. At Thr-90 the chain carries Phosphothreonine. Lys-104 is covalently cross-linked (Glycyl lysine isopeptide (Lys-Gly) (interchain with G-Cter in SUMO2)). Residues Ser-120 and Ser-203 each carry the phosphoserine modification. Disordered stretches follow at residues 198–218 (DNGM…MGSD) and 230–331 (ASSV…DVQP). Acidic residues predominate over residues 199 to 210 (NGMDSDMEEEAD). Basic and acidic residues predominate over residues 234–251 (RENKQPEGLELKQGKGED). Low complexity predominate over residues 272–281 (EEAAAPEAPE). The stretch at 281–311 (ENTVQSEAGQIDDLEKDIEKSVNEILGLAES) forms a coiled coil. Phosphoserine is present on Ser-312.

In terms of tissue distribution, ubiquitous.

Functionally, anti-apoptotic protein that modulates a caspase-10 dependent mitochondrial caspase-3/9 feedback amplification loop. This is Caspase activity and apoptosis inhibitor 1 (CAAP1) from Homo sapiens (Human).